Here is a 424-residue protein sequence, read N- to C-terminus: Protein CapL (424 aa).

This sequence belongs to the UDP-glucose/GDP-mannose dehydrogenase family.

Its pathway is capsule biogenesis; capsule polysaccharide biosynthesis. Its function is as follows. Required for the biosynthesis of type 1 capsular polysaccharide. The chain is Protein CapL (capL) from Staphylococcus aureus.